A 455-amino-acid chain; its full sequence is Dihydrolipoyllysine-residue succinyltransferase component of 2-oxoglutarate dehydrogenase complex, mitochondrial (455 aa).

Residues 1-68 (MLSRSRCASR…RFFRTTAVCK (68 aa)) constitute a mitochondrion transit peptide. The Lipoyl-binding domain maps to 71–145 (VITVKTPAFA…EGGTPLFTLR (75 aa)). Residue S82 is modified to Phosphoserine. K111 is modified (N6-lipoyllysine). The residue at position 155 (K155) is an N6-acetyllysine. The span at 155 to 173 (KPAAAPAAAAPKAEPTVSA) shows a compositional bias: low complexity. The segment at 155–220 (KPAAAPAAAA…PRAEAGAGVG (66 aa)) is disordered. A compositionally biased stretch (pro residues) spans 174–193 (VPPPPAAPIPTQMPPVPSPS). 5 positions are modified to N6-acetyllysine: K269, K274, K275, K279, and K309. Residues H426 and D430 contribute to the active site.

The protein belongs to the 2-oxoacid dehydrogenase family. In terms of assembly, the 2-oxoglutarate dehydrogenase complex is composed of OGDH (2-oxoglutarate dehydrogenase; E1), DLST (dihydrolipoamide succinyltransferase; E2), DLD (dihydrolipoamide dehydrogenase; E3) and the assembly factor KGD4. It contains multiple copies of the three enzymatic components (E1, E2 and E3). In the nucleus, the 2-oxoglutarate dehydrogenase complex associates with KAT2A. Interacts with ABHD11; this interaction maintains the functional lipoylation of the 2-oxoglutarate dehydrogenase complex. (R)-lipoate serves as cofactor.

It localises to the mitochondrion matrix. The protein localises to the nucleus. It catalyses the reaction N(6)-[(R)-dihydrolipoyl]-L-lysyl-[protein] + succinyl-CoA = N(6)-[(R)-S(8)-succinyldihydrolipoyl]-L-lysyl-[protein] + CoA. It functions in the pathway amino-acid degradation; L-lysine degradation via saccharopine pathway; glutaryl-CoA from L-lysine: step 6/6. Its pathway is carbohydrate metabolism; tricarboxylic acid cycle. Dihydrolipoamide succinyltransferase (E2) component of the 2-oxoglutarate dehydrogenase complex. The 2-oxoglutarate dehydrogenase complex catalyzes the overall conversion of 2-oxoglutarate to succinyl-CoA and CO(2). The 2-oxoglutarate dehydrogenase complex is mainly active in the mitochondrion. A fraction of the 2-oxoglutarate dehydrogenase complex also localizes in the nucleus and is required for lysine succinylation of histones: associates with KAT2A on chromatin and provides succinyl-CoA to histone succinyltransferase KAT2A. The protein is Dihydrolipoyllysine-residue succinyltransferase component of 2-oxoglutarate dehydrogenase complex, mitochondrial of Bos taurus (Bovine).